The following is a 174-amino-acid chain: Photosystem I assembly protein Ycf4 (174 aa).

2 helical membrane passes run 11 to 31 and 56 to 76; these read LSNIFWALTITLGGLGFFLNG and IILMFYGTVALILGLFLCLTI.

The protein belongs to the Ycf4 family.

The protein localises to the plastid. It is found in the chloroplast thylakoid membrane. Its function is as follows. Seems to be required for the assembly of the photosystem I complex. This Emiliania huxleyi (Coccolithophore) protein is Photosystem I assembly protein Ycf4.